Consider the following 237-residue polypeptide: tRNA1(Val) (adenine(37)-N6)-methyltransferase (237 aa).

It belongs to the methyltransferase superfamily. tRNA (adenine-N(6)-)-methyltransferase family.

It localises to the cytoplasm. The catalysed reaction is adenosine(37) in tRNA1(Val) + S-adenosyl-L-methionine = N(6)-methyladenosine(37) in tRNA1(Val) + S-adenosyl-L-homocysteine + H(+). Functionally, specifically methylates the adenine in position 37 of tRNA(1)(Val) (anticodon cmo5UAC). The sequence is that of tRNA1(Val) (adenine(37)-N6)-methyltransferase from Tolumonas auensis (strain DSM 9187 / NBRC 110442 / TA 4).